Here is a 273-residue protein sequence, read N- to C-terminus: Cell division protein ZipA (273 aa).

Position 1 (M1) is a topological domain, periplasmic. Residues 2-22 (EFGLREWLIVIGIIVIAGILF) traverse the membrane as a helical segment. The Cytoplasmic portion of the chain corresponds to 23–273 (DGWRRMRGGK…FERRQLTQKR (251 aa)). Residues 65-125 (EMEPQLDEDD…QEPKKSAKLS (61 aa)) are disordered. Positions 111–120 (VDDKPQEPKK) are enriched in basic and acidic residues.

It belongs to the ZipA family. As to quaternary structure, interacts with FtsZ via their C-terminal domains.

Its subcellular location is the cell inner membrane. Essential cell division protein that stabilizes the FtsZ protofilaments by cross-linking them and that serves as a cytoplasmic membrane anchor for the Z ring. Also required for the recruitment to the septal ring of downstream cell division proteins. The chain is Cell division protein ZipA from Ectopseudomonas mendocina (strain ymp) (Pseudomonas mendocina).